The chain runs to 355 residues: Arginine kinase (355 aa).

Positions 6–90 (TLEKLEAGFS…FDPIIEDYHN (85 aa)) constitute a Phosphagen kinase N-terminal domain. 63–67 (GVGIY) provides a ligand contact to substrate. The region spanning 118–355 (FVVSTRVRCG…AELIKIEKSL (238 aa)) is the Phosphagen kinase C-terminal domain. ATP is bound by residues 121 to 125 (STRVR) and His-184. Residue Glu-224 participates in substrate binding. Position 228 (Arg-228) interacts with ATP. Cys-270 contacts substrate. ATP-binding positions include 279 to 283 (RASVH) and 308 to 313 (RGTRGE). Glu-313 is a substrate binding site.

Belongs to the ATP:guanido phosphotransferase family.

It catalyses the reaction L-arginine + ATP = N(omega)-phospho-L-arginine + ADP + H(+). In Plodia interpunctella (Indianmeal moth), this protein is Arginine kinase (ARGK).